We begin with the raw amino-acid sequence, 182 residues long: Fimbrial subunit type 1 (182 aa).

Positions 1–23 are cleaved as a signal peptide; sequence MKIKTLAIVVLSALSLSSAAALA. The cysteines at positions 44 and 84 are disulfide-linked.

Belongs to the fimbrial protein family.

It localises to the fimbrium. This Klebsiella pneumoniae protein is Fimbrial subunit type 1.